The chain runs to 421 residues: Serine hydroxymethyltransferase (421 aa).

(6S)-5,6,7,8-tetrahydrofolate contacts are provided by residues L121 and 125-127 (GHL). K229 is modified (N6-(pyridoxal phosphate)lysine).

Belongs to the SHMT family. Homodimer. Pyridoxal 5'-phosphate is required as a cofactor.

The protein localises to the cytoplasm. The enzyme catalyses (6R)-5,10-methylene-5,6,7,8-tetrahydrofolate + glycine + H2O = (6S)-5,6,7,8-tetrahydrofolate + L-serine. It functions in the pathway one-carbon metabolism; tetrahydrofolate interconversion. It participates in amino-acid biosynthesis; glycine biosynthesis; glycine from L-serine: step 1/1. Catalyzes the reversible interconversion of serine and glycine with tetrahydrofolate (THF) serving as the one-carbon carrier. This reaction serves as the major source of one-carbon groups required for the biosynthesis of purines, thymidylate, methionine, and other important biomolecules. Also exhibits THF-independent aldolase activity toward beta-hydroxyamino acids, producing glycine and aldehydes, via a retro-aldol mechanism. This is Serine hydroxymethyltransferase from Haemophilus influenzae (strain PittEE).